The following is a 251-amino-acid chain: Insertion sequence IS5376 putative ATP-binding protein (251 aa).

105-112 is a binding site for ATP; it reads GPPGIGKT.

This sequence belongs to the IS21/IS1162 putative ATP-binding protein family.

The polypeptide is Insertion sequence IS5376 putative ATP-binding protein (Geobacillus stearothermophilus (Bacillus stearothermophilus)).